The following is a 353-amino-acid chain: Ferredoxin--NADP reductase (353 aa).

FAD contacts are provided by threonine 25, glutamate 44, glutamine 52, tyrosine 57, valine 97, phenylalanine 132, aspartate 298, and serine 339.

It belongs to the ferredoxin--NADP reductase type 2 family. As to quaternary structure, homodimer. The cofactor is FAD.

The enzyme catalyses 2 reduced [2Fe-2S]-[ferredoxin] + NADP(+) + H(+) = 2 oxidized [2Fe-2S]-[ferredoxin] + NADPH. This is Ferredoxin--NADP reductase from Chlorobium chlorochromatii (strain CaD3).